Reading from the N-terminus, the 343-residue chain is Phenylalanine--tRNA ligase alpha subunit (343 aa).

E256 contacts Mg(2+).

This sequence belongs to the class-II aminoacyl-tRNA synthetase family. Phe-tRNA synthetase alpha subunit type 1 subfamily. In terms of assembly, tetramer of two alpha and two beta subunits. It depends on Mg(2+) as a cofactor.

It localises to the cytoplasm. The enzyme catalyses tRNA(Phe) + L-phenylalanine + ATP = L-phenylalanyl-tRNA(Phe) + AMP + diphosphate + H(+). In Phytoplasma australiense, this protein is Phenylalanine--tRNA ligase alpha subunit.